A 284-amino-acid polypeptide reads, in one-letter code: Avenin-like b11 (284 aa).

A signal peptide spans 1–18 (MKVFILALLALTATTAIA).

It belongs to the prolamin family. Contains disulfide bonds.

Functionally, seed storage protein. Might be integrated via inter-chain disulfide bonds within the glutenin polymer. The polypeptide is Avenin-like b11 (Triticum aestivum (Wheat)).